Reading from the N-terminus, the 319-residue chain is Multivesicular body subunit 12B (319 aa).

Residues 1 to 50 (MRSCFCVRRSRDPPPPQPPPPPPQRGTDQSTMPEVKDLSEALPETSMDPI) form a disordered region. Pro residues predominate over residues 13–24 (PPPPQPPPPPPQ). Residues S46 and S101 each carry the phosphoserine modification. In terms of domain architecture, MABP spans 47–193 (MDPITGVGVV…SMGIWYRMGR (147 aa)). 3 positions are modified to phosphothreonine: T122, T204, and T205. Residues 195-222 (PRNHDSSQPTTPSQSSAASTPAPNLPRH) form a disordered region. Low complexity predominate over residues 200 to 216 (SSQPTTPSQSSAASTPA). S224 carries the phosphoserine modification. A UMA domain is found at 254-303 (MDGVPFMISEKFSCVPESMQPFDLLGITIKSLAEIEKEYEYSFRTEQSAA). The tract at residues 299 to 319 (EQSAAARLPPSPTRCQQIPQS) is disordered. Residue S309 is modified to Phosphoserine.

This sequence belongs to the MVB12 family. Component of the ESCRT-I complex (endosomal sorting complex required for transport I) which consists of TSG101, VPS28, a VPS37 protein (VPS37A to -D) and MVB12A or MVB12B in a 1:1:1:1 stoichiometry. Interacts with TSG101; the association appears to be mediated by the TSG101-VPS37 binary subcomplex. Interacts with VPS28. Interacts with VPS37B; the association appears to be mediated by the TSG101-VPS37 binary subcomplex. Interacts with VPS37C; the association appears to be mediated by the TSG101-VPS37 binary subcomplex.

The protein resides in the endosome. Its subcellular location is the late endosome membrane. Functionally, component of the ESCRT-I complex, a regulator of vesicular trafficking process. Required for the sorting of endocytic ubiquitinated cargos into multivesicular bodies. In Homo sapiens (Human), this protein is Multivesicular body subunit 12B (MVB12B).